We begin with the raw amino-acid sequence, 330 residues long: Phenylalanine--tRNA ligase alpha subunit (330 aa).

Position 246 (Glu246) interacts with Mg(2+).

It belongs to the class-II aminoacyl-tRNA synthetase family. Phe-tRNA synthetase alpha subunit type 1 subfamily. As to quaternary structure, tetramer of two alpha and two beta subunits. Mg(2+) is required as a cofactor.

Its subcellular location is the cytoplasm. The catalysed reaction is tRNA(Phe) + L-phenylalanine + ATP = L-phenylalanyl-tRNA(Phe) + AMP + diphosphate + H(+). The sequence is that of Phenylalanine--tRNA ligase alpha subunit from Sulfurovum sp. (strain NBC37-1).